We begin with the raw amino-acid sequence, 417 residues long: Calreticulin (417 aa).

An N-terminal signal peptide occupies residues 1–17 (MLLSVPLLLGLLGLAAA). Residues 18-197 (EPAVYFKEQF…NSQVESGSLE (180 aa)) form an N-domain region. Position 26 (Q26) interacts with Ca(2+). K48 is modified (N6-acetyllysine). Residues K62 and K64 each coordinate Ca(2+). K64 is subject to N6-(2-hydroxyisobutyryl)lysine. Residues C105 and C137 are joined by a disulfide bond. The an alpha-D-glucoside site is built by Y109, K111, Y128, and D135. K159 carries the post-translational modification N6-acetyllysine. The 1-1 repeat unit spans residues 191-202 (VESGSLEDDWDF). The 4 X approximate repeats stretch occupies residues 191-255 (VESGSLEDDW…DAKKPEDWDE (65 aa)). The interval 193 to 277 (SGSLEDDWDF…NPEYKGEWKP (85 aa)) is disordered. The tract at residues 198–308 (DDWDFLPPKK…YSPDANIYAY (111 aa)) is P-domain. Positions 207-251 (KIKDPDAAKPEDWDERAKIDDPTDSKPEDWDKPEHIPDPDAKKPE) are enriched in basic and acidic residues. N6-acetyllysine is present on K209. Tandem repeats lie at residues 210–221 (DPDAAKPEDWDE), 227–238 (DPTDSKPEDWDK), 244–255 (DPDAKKPEDWDE), 259–269 (GEWEPPVIQNP), 273–283 (GEWKPRQIDNP), and 287–297 (GTWIHPEIDNP). The interaction with PPIB stretch occupies residues 237-270 (DKPEHIPDPDAKKPEDWDEEMDGEWEPPVIQNPE). Positions 252-261 (DWDEEMDGEW) are enriched in acidic residues. Residues 259–297 (GEWEPPVIQNPEYKGEWKPRQIDNPDYKGTWIHPEIDNP) form a 3 X approximate repeats region. Positions 309-417 (DSFAVLGLDL…TTPGQTKDEL (109 aa)) are C-domain. Residue D317 coordinates an alpha-D-glucoside. Ca(2+) is bound at residue D328. A disordered region spans residues 350–417 (TKASEKQMKD…TTPGQTKDEL (68 aa)). A compositionally biased stretch (basic and acidic residues) spans 352-379 (ASEKQMKDKQDEEQRLKEEEEDKKRKEE). Over residues 380–408 (EEAEDKEDEDDRDEDEEDEDEKEEDEEDT) the composition is skewed to acidic residues. Positions 414–417 (KDEL) match the Prevents secretion from ER motif.

The protein belongs to the calreticulin family. In terms of assembly, monomer. Component of an EIF2 complex at least composed of CELF1/CUGBP1, CALR, CALR3, EIF2S1, EIF2S2, HSP90B1 and HSPA5. Interacts with PDIA3/ERp57 and SPACA9. Interacts with TRIM21. Interacts with NR3C1. Interacts with PPIB. Interacts (via P-domain) with PDIA5. Interacts with GABARAP. Interacts with CLCC1.

The protein localises to the endoplasmic reticulum lumen. It is found in the cytoplasm. The protein resides in the cytosol. Its subcellular location is the cytolytic granule. It localises to the secreted. The protein localises to the extracellular space. It is found in the extracellular matrix. The protein resides in the cell surface. Its subcellular location is the sarcoplasmic reticulum lumen. It localises to the cytoplasmic vesicle. The protein localises to the secretory vesicle. It is found in the cortical granule. Calcium-binding chaperone that promotes folding, oligomeric assembly and quality control in the endoplasmic reticulum (ER) via the calreticulin/calnexin cycle. This lectin interacts transiently with almost all of the monoglucosylated glycoproteins that are synthesized in the ER. Interacts with the DNA-binding domain of NR3C1 and mediates its nuclear export. Involved in maternal gene expression regulation. May participate in oocyte maturation via the regulation of calcium homeostasis. Present in the cortical granules of non-activated oocytes, is exocytosed during the cortical reaction in response to oocyte activation and might participate in the block to polyspermy. This is Calreticulin (CALR) from Cricetulus griseus (Chinese hamster).